A 560-amino-acid polypeptide reads, in one-letter code: 2-succinyl-5-enolpyruvyl-6-hydroxy-3-cyclohexene-1-carboxylate synthase (560 aa).

The protein belongs to the TPP enzyme family. MenD subfamily. As to quaternary structure, homodimer. Mg(2+) is required as a cofactor. It depends on Mn(2+) as a cofactor. Requires thiamine diphosphate as cofactor.

The catalysed reaction is isochorismate + 2-oxoglutarate + H(+) = 5-enolpyruvoyl-6-hydroxy-2-succinyl-cyclohex-3-ene-1-carboxylate + CO2. It functions in the pathway quinol/quinone metabolism; 1,4-dihydroxy-2-naphthoate biosynthesis; 1,4-dihydroxy-2-naphthoate from chorismate: step 2/7. The protein operates within quinol/quinone metabolism; menaquinone biosynthesis. Catalyzes the thiamine diphosphate-dependent decarboxylation of 2-oxoglutarate and the subsequent addition of the resulting succinic semialdehyde-thiamine pyrophosphate anion to isochorismate to yield 2-succinyl-5-enolpyruvyl-6-hydroxy-3-cyclohexene-1-carboxylate (SEPHCHC). The polypeptide is 2-succinyl-5-enolpyruvyl-6-hydroxy-3-cyclohexene-1-carboxylate synthase (Pectobacterium carotovorum subsp. carotovorum (strain PC1)).